Consider the following 433-residue polypeptide: Trigger factor (433 aa).

A PPIase FKBP-type domain is found at 161–246 (EDRVVIDFVG…LKKVENIVLP (86 aa)).

The protein belongs to the FKBP-type PPIase family. Tig subfamily.

It is found in the cytoplasm. It carries out the reaction [protein]-peptidylproline (omega=180) = [protein]-peptidylproline (omega=0). Involved in protein export. Acts as a chaperone by maintaining the newly synthesized protein in an open conformation. Functions as a peptidyl-prolyl cis-trans isomerase. This is Trigger factor from Actinobacillus pleuropneumoniae serotype 5b (strain L20).